The sequence spans 150 residues: MIVEEIQGNIANLSNSEKQKHVEKVYLENSDLVKRIQRVVTDHGTEIGIRLKQPIDLQYGDILYADDHNMIVVDVNSEDLLVIQPRTLQEMGDIAHQLGNRHLPAQFTETEMLVQYDYLVEDLLKSLGIPYVREDRKVNKAFRHIGHSHD.

Belongs to the UreE family.

Its subcellular location is the cytoplasm. Functionally, involved in urease metallocenter assembly. Binds nickel. Probably functions as a nickel donor during metallocenter assembly. This is Urease accessory protein UreE from Staphylococcus aureus (strain MRSA252).